Consider the following 443-residue polypeptide: Glucose-6-phosphate isomerase (443 aa).

The Proton donor role is filled by Glu-285. Active-site residues include His-306 and Lys-420.

The protein belongs to the GPI family.

Its subcellular location is the cytoplasm. It carries out the reaction alpha-D-glucose 6-phosphate = beta-D-fructose 6-phosphate. It functions in the pathway carbohydrate biosynthesis; gluconeogenesis. It participates in carbohydrate degradation; glycolysis; D-glyceraldehyde 3-phosphate and glycerone phosphate from D-glucose: step 2/4. Functionally, catalyzes the reversible isomerization of glucose-6-phosphate to fructose-6-phosphate. This chain is Glucose-6-phosphate isomerase, found in Staphylococcus aureus (strain USA300).